Here is a 474-residue protein sequence, read N- to C-terminus: MSYQTGMAPARAMEDDSDVEEEALVADYREQVQYSEGGMEEMDQATLAQQADEIQSRLVQASQPLDFQATLETKFASYDNYCALFHYILNSEGPVDLEPPTYYWAWDVIDEFIYQFNTFCTYRARIARQAGNEEEAQILRDNPNTWGCYSVLNVLYSLIQKSQITEQLAAMKRNEDPMAVAGPYGSKNLYRMLGYFSIIGLLRVHCLLGDFSLALKTLDDIELNKKAMFARVMAAHFTTYYYVGFSYMMMRRYADAIRMFSHILIYVSRTKNFQKNTQYDSITKKNDQMLALIAICVAFHPTRLDDTIHTALREKYGDQLLKLQRGGPDSLPVFEELFKSACPKFMSPIPPDFDKPEANIDPIDHHLSVFMEEVKTNMWSPTVKSYLRLYTTMDLKKLAGFLDVKPEELRSWLLVSKQRTKQLRWTENGLLEGEPVNVSDLDYALQGDLIHISEAKMGRKLVDWYIRNLSRTYA.

In terms of domain architecture, PCI spans 255-449 (DAIRMFSHIL…DLDYALQGDL (195 aa)).

It belongs to the eIF-3 subunit L family. As to quaternary structure, component of the eukaryotic translation initiation factor 3 (eIF-3) complex.

It localises to the cytoplasm. Component of the eukaryotic translation initiation factor 3 (eIF-3) complex, which is involved in protein synthesis of a specialized repertoire of mRNAs and, together with other initiation factors, stimulates binding of mRNA and methionyl-tRNAi to the 40S ribosome. The eIF-3 complex specifically targets and initiates translation of a subset of mRNAs involved in cell proliferation. The polypeptide is Eukaryotic translation initiation factor 3 subunit L (Chaetomium globosum (strain ATCC 6205 / CBS 148.51 / DSM 1962 / NBRC 6347 / NRRL 1970) (Soil fungus)).